Here is a 171-residue protein sequence, read N- to C-terminus: uncharacterized protein (171 aa).

2 disordered regions span residues 68-112 and 152-171; these read NKNN…DQPY and LPEKAKRGSDDEDDMFSIKN. Residues 161–171 are compositionally biased toward acidic residues; sequence DDEDDMFSIKN.

It belongs to the asfivirus H171R family.

It localises to the virion. This is an uncharacterized protein from African swine fever virus (strain Badajoz 1971 Vero-adapted) (Ba71V).